Reading from the N-terminus, the 440-residue chain is Serine/threonine-protein kinase STK11 (440 aa).

In terms of domain architecture, Protein kinase spans 49–309 (YLMGDLLGEG…IQQIRQHNWF (261 aa)). Residues 55–63 (LGEGSYGKV) and lysine 78 each bind ATP. The active-site Proton acceptor is the aspartate 176. Threonine 336 and threonine 365 each carry phosphothreonine; by autocatalysis. Residues 370–440 (VPGQVPEEEA…IRKLSTCKQQ (71 aa)) form a disordered region. Positions 430–440 (KIRKLSTCKQQ) are enriched in basic residues. Serine 435 carries the phosphoserine; by PKA modification.

This sequence belongs to the protein kinase superfamily. CAMK Ser/Thr protein kinase family. LKB1 subfamily. As to quaternary structure, catalytic component of a trimeric complex composed of STK11/LKB1, STRAD (STRADA or STRADB) and CAB39/MO25 (CAB39/MO25alpha or CAB39L/MO25beta). Requires Mg(2+) as cofactor. Mn(2+) is required as a cofactor. Ubiquitously expressed in all tissues tested. High levels were observed in duodenum and skeletal muscle, lower levels in liver and pancreas.

It localises to the nucleus. Its subcellular location is the cytoplasm. The enzyme catalyses L-seryl-[protein] + ATP = O-phospho-L-seryl-[protein] + ADP + H(+). It carries out the reaction L-threonyl-[protein] + ATP = O-phospho-L-threonyl-[protein] + ADP + H(+). Its function is as follows. Tumor suppressor serine/threonine-protein kinase that controls the activity of AMP-activated protein kinase (AMPK) family members, thereby playing a role in various processes such as cell metabolism, cell polarity, apoptosis and DNA damage response. Acts by phosphorylating the T-loop of AMPK family proteins, leading to promote their activity. This chain is Serine/threonine-protein kinase STK11, found in Gallus gallus (Chicken).